A 473-amino-acid chain; its full sequence is MTDSKSAAPTTLYDKIWNDHLVHEADDGTCLLYIDRHLVHEVTSPQAFEGLRTAGRKVHAPEKTLAVVDHNVPTTDRSKPNPDPESADQIAALAENAREFGVTYYNEFDKRQGVVHVIGPEQGFTLPGTTIVCGDSHTSTHGAFGALAHGIGTSEVEHVLATQTLIQKKAKNMRVTVDGALPDGVTAKDIILAIIGEIGTAGGTGYVLEYAGSAIRALSMEGRMTVCNMSIEGGARAGLIAPDEKAYAYLKGRPMAPTGANWDAAMRYWETLRSDEGAHFDHELRLDAAALPPIVTWGTSPEDVISILGSVPNPADIADEAKRLSKERALAYMGLTAGTKITDIKIDRAFIGSCTNGRIEDLRAAAKVAEGKTVNGNVNAIIVPGSGLVKEQAEAEGLDKIFIAAGFEWREPGCSMCLAMNPDKLAPDERCASTSNRNFEGRQGFKGRTHLVSPAMAAAAAIAGHFVDIRDWR.

[4Fe-4S] cluster is bound by residues Cys-354, Cys-414, and Cys-417.

Belongs to the aconitase/IPM isomerase family. LeuC type 1 subfamily. As to quaternary structure, heterodimer of LeuC and LeuD. It depends on [4Fe-4S] cluster as a cofactor.

The enzyme catalyses (2R,3S)-3-isopropylmalate = (2S)-2-isopropylmalate. It participates in amino-acid biosynthesis; L-leucine biosynthesis; L-leucine from 3-methyl-2-oxobutanoate: step 2/4. Catalyzes the isomerization between 2-isopropylmalate and 3-isopropylmalate, via the formation of 2-isopropylmaleate. The chain is 3-isopropylmalate dehydratase large subunit from Rhodopseudomonas palustris (strain BisB18).